A 2550-amino-acid chain; its full sequence is Highly reducing polyketide synthase otaA (2550 aa).

The Ketosynthase family 3 (KS3) domain maps to 9–431; it reads SEPLAIIGLA…GTNAHAVVED (423 aa). Residues Cys-182, His-317, and His-355 each act as for beta-ketoacyl synthase activity in the active site. A malonyl-CoA:ACP transacylase (MAT) domain region spans residues 572–894; that stretch reads FVFTGQGANW…KRYETNGSTI (323 aa). Residues 959 to 1094 are N-terminal hotdog fold; it reads HELLGVPVED…GSVRAETGPP (136 aa). Residues 959–1252 form a dehydratase (DH) domain region; sequence HELLGVPVED…DLVQLPANND (294 aa). The PKS/mFAS DH domain maps to 959 to 1253; sequence HELLGVPVED…LVQLPANNDD (295 aa). Residues 1107-1253 form a C-terminal hotdog fold region; the sequence is AEPVDIAQMY…LVQLPANNDD (147 aa). Residues Ile-1420 and Glu-1442 each coordinate S-adenosyl-L-methionine. The interval 1433-1612 is methyltransferase (CMeT) domain; it reads HAQTGIKILE…GLRPRLIIND (180 aa). Positions 1859–1919 are enoyl reductase (ER) (ER) domain; sequence PDEVKIRIHA…DQVMALRTGP (61 aa). A ketoreductase (KR) domain region spans residues 2166–2345; it reads ASYLLIGGFG…PATSVSLGSV (180 aa). One can recognise a Carrier domain in the interval 2454–2531; sequence AAVEVVTRAI…QLAQQAADAS (78 aa). An O-(pantetheine 4'-phosphoryl)serine modification is found at Ser-2491.

Requires pantetheine 4'-phosphate as cofactor.

The catalysed reaction is 4 malonyl-CoA + acetyl-CoA + 5 NADPH + 9 H(+) = 7-methylmellein + 3 CO2 + 5 NADP(+) + 5 CoA + 4 H2O. The protein operates within mycotoxin biosynthesis. In terms of biological role, highly reducing polyketide synthase; part of the gene cluster that mediates the biosynthesis of ochratoxin A (OTA), a mycotoxin composed of a chlorinated type I polyketide dihydroisocoumarin moiety linked to L-phenylalanine, and demonstrated to have nephrotoxic, immunotoxic, genotoxic, neurotoxic, and teratogenic properties. OtaA catalyzes the condensation of one acetate and 4 malonate units to form the isocoumarin group. The pathway begins with the highly reducing polyketide synthase otaA that catalyzes the formation of the isocoumarin group during the initial stages of biosynthesis, starting from one acetate and 4 malonate units, to originate the characteristic pentaketide skeleton 7-methylmellein (7-MM) of the OTA molecule. The newly identified cyclase otaY might be involved in the polyketide cyclization reaction during the initial steps of the OTA biosynthesis. 7-MM is then oxidized into 7-carboxymellein (also called ochratoxin beta) by the cytochrome P450 monooxygenase otaC. The NRPS encoded by the otaB gene is involved in the linking of phenylalanine to the dihydroisocoumarin ring. The reaction catalyzed by NRPS results in the production of ochratoxin B (OTB), which is the non-chlorinated analog of OTA and which subsequently serves as the substrate of the halogenase otaD for chlorination activity to form the final molecular structure of OTA, containing a chlorine atom in the C-5 position of the molecule. The polypeptide is Highly reducing polyketide synthase otaA (Aspergillus niger (strain ATCC MYA-4892 / CBS 513.88 / FGSC A1513)).